A 227-amino-acid chain; its full sequence is Ribosomal RNA large subunit methyltransferase E (227 aa).

S-adenosyl-L-methionine-binding residues include Gly78, Trp80, Asp103, Asp119, and Asp143. Lys183 acts as the Proton acceptor in catalysis.

The protein belongs to the class I-like SAM-binding methyltransferase superfamily. RNA methyltransferase RlmE family.

It localises to the cytoplasm. The catalysed reaction is uridine(2552) in 23S rRNA + S-adenosyl-L-methionine = 2'-O-methyluridine(2552) in 23S rRNA + S-adenosyl-L-homocysteine + H(+). Specifically methylates the uridine in position 2552 of 23S rRNA at the 2'-O position of the ribose in the fully assembled 50S ribosomal subunit. This is Ribosomal RNA large subunit methyltransferase E from Rickettsia canadensis (strain McKiel).